A 702-amino-acid chain; its full sequence is SAGA complex subunit NGG1 (702 aa).

The segment covering 1–10 has biased composition (basic residues); it reads MPRHGRRGKL. Disordered stretches follow at residues 1-29 and 90-224; these read MPRHGRRGKLPKGEKLPKKEGGDNTPSKL and LRKI…VKNP. Basic and acidic residues-rich tracts occupy residues 11–22 and 90–108; these read PKGEKLPKKEGG and LRKIRDSKNEKQANDEKQE. The span at 109–125 shows a compositional bias: polar residues; it reads TSNADGQHESSTATEET. Residue Ser134 is modified to Phosphoserine. The span at 162 to 219 shows a compositional bias: basic and acidic residues; that stretch reads MAKEEINEDKDLQVHRDQPREKRPFDSETENRATENENTQRPDNKKQKIDVDKMENDP. Ser407 carries the post-translational modification Phosphoserine. Thr464 carries the post-translational modification Phosphothreonine. The short motif at 606–618 is the Nuclear localization signal element; that stretch reads KRIRVPKKRKKHH. Disordered regions lie at residues 611–636 and 672–702; these read PKKRKKHHTAASNNVNTGTTSQIAQQ and NESVFKDMDQEEDEDEADVFAQNTNKDVELN. The segment covering 620–636 has biased composition (polar residues); it reads AASNNVNTGTTSQIAQQ. Residues 680–689 show a composition bias toward acidic residues; that stretch reads DQEEDEDEAD.

It belongs to the NGG1 family. Component of the 1.8 MDa SAGA (Spt-Ada-Gcn5 acetyltransferase) complex, which is composed of 19 subunits TRA1, SPT7, TAF5, NGG1/ADA3, SGF73, SPT20/ADA5, SPT8, TAF12, TAF6, HFI1/ADA1, UBP8, GCN5, ADA2, SPT3, SGF29, TAF10, TAF9, SGF11 and SUS1. The SAGA complex is composed of 4 modules, namely the HAT (histone acetyltransferase) module (GCN5, ADA2, NGG1/ADA3 and SGF29), the DUB (deubiquitinating) module (UBP8, SGF11, SGF73 and SUS1), the core or TAF (TBP-associated factor) module (TAF5, TAF6, TAF9, TAF10 and TAF12), and the Tra1 or SPT (Suppressor of Ty) module (TRA1, HFI1/ADA1, SPT3, SPT7, SPT8 and SPT20/ADA5). The Tra1/SPT module binds activators, the core module recruits TBP (TATA-binding protein), the HAT module contains the histone H3 acetyltransferase GCN5, and the DUB module comprises the histone H2B deubiquitinase UBP8. Also identified in an altered form of SAGA, named SALSA (SAGA altered, Spt8 absent) or SLIK (SAGA-like) complex, which contains a C-terminal truncated form of SPT7 and is missing SPT8. However, it has been shown that the SAGA and SAGA-like SALSA/SLIK transcriptional coactivators are structurally and biochemically equivalent. Component of the 0.8 MDa ADA complex, a HAT complex distinct from SAGA, which at least consists of ADA2, NGG1/ADA3, AHC1, AHC2, SGF29 and GCN5. Identified in an Ada.spt complex with SPT7 and TRA1. Component of an ADA/GCN5 complex that consists of HFI1/ADA1, ADA2, NGG1/ADA3, SPT20/ADA5 and GCN5 and probably is a subcomplex of SAGA.

The protein resides in the nucleus. Its function is as follows. Component of the transcription coactivator SAGA complex. SAGA acts as a general cofactor required for essentially all RNA polymerase II transcription. At the promoters, SAGA is required for transcription pre-initiation complex (PIC) recruitment. It influences RNA polymerase II transcriptional activity through different activities such as TBP interaction (via core/TAF module) and promoter selectivity, interaction with transcription activators (via Tra1/SPT module), and chromatin modification through histone acetylation (via HAT module) and deubiquitination (via DUB module). SAGA preferentially acetylates histones H3 (to form H3K9ac, H3K14ac, H3K18ac and H3K23ac) and H2B and deubiquitinates histone H2B. SAGA interacts with DNA via upstream activating sequences (UASs). Also identified in a modified version of SAGA named SALSA or SLIK. The cleavage of SPT7 and the absence of the SPT8 subunit in SLIK neither drive any major conformational differences in its structure compared with SAGA, nor significantly affect HAT, DUB, or DNA-binding activities. Component of the ADA histone acetyltransferase complex, which preferentially acetylates nucleosomal histones H3 (to form H3K14ac and H3K18ac) and H2B. May be involved in response to DNA damage by genotoxic agents. The protein is SAGA complex subunit NGG1 (NGG1) of Saccharomyces cerevisiae (strain ATCC 204508 / S288c) (Baker's yeast).